The primary structure comprises 197 residues: ATP-dependent Clp protease proteolytic subunit (197 aa).

The active-site Nucleophile is the S98. H123 is a catalytic residue.

Belongs to the peptidase S14 family. In terms of assembly, fourteen ClpP subunits assemble into 2 heptameric rings which stack back to back to give a disk-like structure with a central cavity, resembling the structure of eukaryotic proteasomes.

It is found in the cytoplasm. It catalyses the reaction Hydrolysis of proteins to small peptides in the presence of ATP and magnesium. alpha-casein is the usual test substrate. In the absence of ATP, only oligopeptides shorter than five residues are hydrolyzed (such as succinyl-Leu-Tyr-|-NHMec, and Leu-Tyr-Leu-|-Tyr-Trp, in which cleavage of the -Tyr-|-Leu- and -Tyr-|-Trp bonds also occurs).. Functionally, cleaves peptides in various proteins in a process that requires ATP hydrolysis. Has a chymotrypsin-like activity. Plays a major role in the degradation of misfolded proteins. The protein is ATP-dependent Clp protease proteolytic subunit of Lysinibacillus sphaericus (strain C3-41).